Reading from the N-terminus, the 494-residue chain is Hydroxyneurosporene desaturase (494 aa).

This sequence belongs to the carotenoid/retinoid oxidoreductase family.

The enzyme catalyses rhodopin + A = (3E)-3,4-didehydrorhodopin + AH2. The protein operates within carotenoid biosynthesis; spheroidene biosynthesis. Its function is as follows. Catalyzes the introduction of C-3,4 double bonds into 1-hydroxyneurosporene (1-HO-Neu) to yield demethylspheroidene (DMS). The polypeptide is Hydroxyneurosporene desaturase (crtD) (Rhodobacter capsulatus (strain ATCC BAA-309 / NBRC 16581 / SB1003)).